The following is a 53-amino-acid chain: MRWTMLLSFPFQDHHRRHHLANLVRLRHLDHRCSWPRYCCCKLVWTLQSLCMR.

This is an uncharacterized protein from Saccharomyces cerevisiae (strain ATCC 204508 / S288c) (Baker's yeast).